Reading from the N-terminus, the 252-residue chain is Imidazole glycerol phosphate synthase subunit HisF (252 aa).

Residues Asp-11 and Asp-130 contribute to the active site.

Belongs to the HisA/HisF family. As to quaternary structure, heterodimer of HisH and HisF.

The protein resides in the cytoplasm. It catalyses the reaction 5-[(5-phospho-1-deoxy-D-ribulos-1-ylimino)methylamino]-1-(5-phospho-beta-D-ribosyl)imidazole-4-carboxamide + L-glutamine = D-erythro-1-(imidazol-4-yl)glycerol 3-phosphate + 5-amino-1-(5-phospho-beta-D-ribosyl)imidazole-4-carboxamide + L-glutamate + H(+). The protein operates within amino-acid biosynthesis; L-histidine biosynthesis; L-histidine from 5-phospho-alpha-D-ribose 1-diphosphate: step 5/9. Functionally, IGPS catalyzes the conversion of PRFAR and glutamine to IGP, AICAR and glutamate. The HisF subunit catalyzes the cyclization activity that produces IGP and AICAR from PRFAR using the ammonia provided by the HisH subunit. In Bacillus cereus (strain AH820), this protein is Imidazole glycerol phosphate synthase subunit HisF.